The following is a 329-amino-acid chain: Putative ubiquitin thioesterase otu1 (329 aa).

A UBX-like region spans residues 7 to 89; that stretch reads RLKYENQSAV…ATSFSTNEPA (83 aa). The interval 85–127 is disordered; the sequence is TNEPAKPPIPNAATKPTFPPQTEISNPPAVSHQSKNTSQDPPY. Polar residues predominate over residues 115-124; sequence SHQSKNTSQD. Residues 135–254 form the OTU domain; sequence IALRVMPDDN…GIHYDLAALA (120 aa). Residues 140–146 form a cys-loop region; sequence MPDDNSC. The active site involves aspartate 143. The Nucleophile role is filled by cysteine 146. The variable-loop stretch occupies residues 193-203; sequence IRKETSWGGYI. Residues 243–247 are his-loop; sequence YSGIH. Isoleucine 246 is a binding site for substrate. Histidine 247 is a catalytic residue. The segment at 272-277 is S2 site; it reads VTITPY. The segment at 299 to 323 adopts a C2H2-type zinc-finger fold; sequence IRCTICGTGLVGEKDATAHALATGH. Histidine 323 is an active-site residue.

The protein localises to the cytoplasm. The protein resides in the nucleus. The catalysed reaction is Thiol-dependent hydrolysis of ester, thioester, amide, peptide and isopeptide bonds formed by the C-terminal Gly of ubiquitin (a 76-residue protein attached to proteins as an intracellular targeting signal).. Hydrolase that can remove conjugated ubiquitin from proteins and may therefore play an important regulatory role at the level of protein turnover by preventing degradation. Has a role in meiosis. In Schizosaccharomyces pombe (strain 972 / ATCC 24843) (Fission yeast), this protein is Putative ubiquitin thioesterase otu1 (otu1).